Reading from the N-terminus, the 488-residue chain is Glutamyl-tRNA(Gln) amidotransferase subunit A (488 aa).

Residues Lys-77 and Ser-152 each act as charge relay system in the active site. The active-site Acyl-ester intermediate is the Ser-176.

The protein belongs to the amidase family. GatA subfamily. In terms of assembly, heterotrimer of A, B and C subunits.

It carries out the reaction L-glutamyl-tRNA(Gln) + L-glutamine + ATP + H2O = L-glutaminyl-tRNA(Gln) + L-glutamate + ADP + phosphate + H(+). In terms of biological role, allows the formation of correctly charged Gln-tRNA(Gln) through the transamidation of misacylated Glu-tRNA(Gln) in organisms which lack glutaminyl-tRNA synthetase. The reaction takes place in the presence of glutamine and ATP through an activated gamma-phospho-Glu-tRNA(Gln). The protein is Glutamyl-tRNA(Gln) amidotransferase subunit A of Streptococcus sanguinis (strain SK36).